Consider the following 449-residue polypeptide: Glucose-6-phosphate isomerase (449 aa).

Glu-291 acts as the Proton donor in catalysis. Active-site residues include His-312 and Lys-426.

It belongs to the GPI family.

Its subcellular location is the cytoplasm. The enzyme catalyses alpha-D-glucose 6-phosphate = beta-D-fructose 6-phosphate. It functions in the pathway carbohydrate biosynthesis; gluconeogenesis. The protein operates within carbohydrate degradation; glycolysis; D-glyceraldehyde 3-phosphate and glycerone phosphate from D-glucose: step 2/4. Its function is as follows. Catalyzes the reversible isomerization of glucose-6-phosphate to fructose-6-phosphate. This Streptococcus agalactiae serotype Ia (strain ATCC 27591 / A909 / CDC SS700) protein is Glucose-6-phosphate isomerase.